The primary structure comprises 351 residues: Probable glucuronosyltransferase Os10g0205300 (351 aa).

The Cytoplasmic segment spans residues 1–11; sequence MAAPPCPPRRP. A helical; Signal-anchor for type II membrane protein transmembrane segment spans residues 12–32; the sequence is ISAPCFLLCFLLGFVAGLFPF. Topologically, residues 33-351 are lumenal; sequence AHRHLHLDLH…PLKKEARPLL (319 aa). The tract at residues 138–169 is disordered; it reads SSPVPDAPQDRPRRRGRRQDRPAVDSRARQRN. Positions 156 to 169 are enriched in basic and acidic residues; that stretch reads QDRPAVDSRARQRN. N-linked (GlcNAc...) asparagine glycosylation occurs at asparagine 259.

It belongs to the glycosyltransferase 43 family.

The protein resides in the golgi apparatus membrane. In terms of biological role, involved in the synthesis of glucuronoxylan hemicellulose in secondary cell walls. The polypeptide is Probable glucuronosyltransferase Os10g0205300 (Oryza sativa subsp. japonica (Rice)).